Consider the following 126-residue polypeptide: Fluoride-specific ion channel FluC (126 aa).

4 consecutive transmembrane segments (helical) span residues 1 to 21 (MIVI…FGLD), 40 to 60 (LATL…GGFA), 72 to 92 (AISI…VATV), and 104 to 124 (MVNI…GLSL). Residues glycine 79 and threonine 82 each contribute to the Na(+) site.

This sequence belongs to the fluoride channel Fluc/FEX (TC 1.A.43) family.

The protein resides in the cell membrane. It carries out the reaction fluoride(in) = fluoride(out). Na(+) is not transported, but it plays an essential structural role and its presence is essential for fluoride channel function. Fluoride-specific ion channel. Important for reducing fluoride concentration in the cell, thus reducing its toxicity. This chain is Fluoride-specific ion channel FluC, found in Renibacterium salmoninarum (strain ATCC 33209 / DSM 20767 / JCM 11484 / NBRC 15589 / NCIMB 2235).